The primary structure comprises 342 residues: MYALIRQLLFRLEPEQAHRVSMQLARLGLRIAAVPGVRSLPAVPRRVMGIDFPNPVGLAAGFDKDGEYMDVLEQLGFGFLELGTVTPRAQPGNPQPRVFRIPEHEALINRMGFNNQGAEPLVRRLEVSRHRGVVGINIGKNRDTPPERAVEDYAQALGMVYGVADYVAVNLSSPNTPGLRDLQHEGALRNLIDRLQTERKRLAELHDKRVPLVVKIAPDWEAGELDATLDILLERRVDGIVATNTTLGRTGVEQTPQARESGGLSGAPLREQAEWVLEQVAARRDRRTALIAAGGIMSGEDVTRRLDLGADLVQLYTGMIYRGPGLVQEAVRAAARHAGQPA.

FMN-binding positions include 60 to 64 and Thr84; that span reads AGFDK. Position 64 (Lys64) interacts with substrate. 109-113 contacts substrate; the sequence is NRMGF. Residues Asn137 and Asn170 each contribute to the FMN site. Position 170 (Asn170) interacts with substrate. The Nucleophile role is filled by Ser173. Asn175 lines the substrate pocket. Residues Lys215 and Thr243 each coordinate FMN. Substrate is bound at residue 244-245; that stretch reads NT. FMN contacts are provided by residues Gly266, Gly295, and 316-317; that span reads YT.

The protein belongs to the dihydroorotate dehydrogenase family. Type 2 subfamily. As to quaternary structure, monomer. FMN is required as a cofactor.

Its subcellular location is the cell membrane. It carries out the reaction (S)-dihydroorotate + a quinone = orotate + a quinol. It functions in the pathway pyrimidine metabolism; UMP biosynthesis via de novo pathway; orotate from (S)-dihydroorotate (quinone route): step 1/1. In terms of biological role, catalyzes the conversion of dihydroorotate to orotate with quinone as electron acceptor. The sequence is that of Dihydroorotate dehydrogenase (quinone) from Halorhodospira halophila (strain DSM 244 / SL1) (Ectothiorhodospira halophila (strain DSM 244 / SL1)).